A 761-amino-acid polypeptide reads, in one-letter code: Neurotrypsin (761 aa).

A signal peptide spans 1 to 21; that stretch reads MALARCVLAVILGALSVVARA. The segment at 25–87 is disordered; it reads SRSPLHRPHP…PPTIPRRCGA (63 aa). The segment covering 38 to 48 has biased composition (low complexity); that stretch reads RSQHAHYLPSS. One can recognise a Kringle domain in the interval 85-157; it reads CGAGESWGNA…GKVDWGYCDC (73 aa). Cystine bridges form between Cys-85–Cys-157, Cys-101–Cys-141, Cys-130–Cys-155, Cys-191–Cys-255, Cys-204–Cys-265, Cys-235–Cys-245, Cys-298–Cys-361, Cys-311–Cys-371, Cys-341–Cys-351, Cys-411–Cys-475, Cys-424–Cys-485, Cys-455–Cys-465, Cys-505–Cys-636, Cys-547–Cys-563, Cys-651–Cys-717, Cys-680–Cys-694, and Cys-707–Cys-736. Asn-93 carries N-linked (GlcNAc...) asparagine glycosylation. SRCR domains follow at residues 166–267, 273–373, and 386–487; these read IRLV…SCVP, IRLA…TCYP, and IRLV…ICDY. The tract at residues 505–516 is zymogen activation region; it reads CGLRLLHRRQKR. Residues 517-760 form the Peptidase S1 domain; it reads IIGGNNSLRG…FVPWIKSVTS (244 aa). Asn-521 is a glycosylation site (N-linked (GlcNAc...) asparagine). The active-site Charge relay system is His-562. Residue Asn-569 is glycosylated (N-linked (GlcNAc...) asparagine). The active-site Charge relay system is the Asp-612. Residue Ser-711 is the Charge relay system of the active site.

It belongs to the peptidase S1 family. Most abundant in cerebral cortex, hippocampus and amygdala.

It is found in the secreted. Functionally, plays a role in neuronal plasticity and the proteolytic action may subserve structural reorganizations associated with learning and memory operations. This chain is Neurotrypsin (Prss12), found in Mus musculus (Mouse).